The chain runs to 318 residues: Sensor histidine kinase NatK (318 aa).

A run of 3 helical transmembrane segments spans residues 4–24, 27–47, and 72–82; these read LFQC…AAAF, STAA…LYIW, and VGVVLIGTDIM. In terms of domain architecture, Histidine kinase spans 132–318; sequence RNHDTMKHIT…RLEIKIPFQK (187 aa). H134 carries the post-translational modification Phosphohistidine; by autocatalysis.

It localises to the cell membrane. It catalyses the reaction ATP + protein L-histidine = ADP + protein N-phospho-L-histidine.. Its function is as follows. Member of the two-component regulatory system NatK/NatR that positively regulates the expression of the natAB operon. Potentially phosphorylates NatR. This Bacillus subtilis (strain 168) protein is Sensor histidine kinase NatK.